Here is a 62-residue protein sequence, read N- to C-terminus: Potassium channel toxin alpha-KTx 18.3 (62 aa).

Positions 1–26 are cleaved as a signal peptide; sequence MHFSGVAFILISMVLIGSIFETTVEA. 3 disulfides stabilise this stretch: cysteine 34–cysteine 53, cysteine 39–cysteine 58, and cysteine 43–cysteine 60.

The protein belongs to the short scorpion toxin superfamily. Potassium channel inhibitor family. Alpha-KTx 18 subfamily. In terms of tissue distribution, expressed by the venom gland.

Its subcellular location is the secreted. In terms of biological role, probable voltage-gated potassium channel inhibitor. This chain is Potassium channel toxin alpha-KTx 18.3, found in Tityus discrepans (Venezuelan scorpion).